A 174-amino-acid polypeptide reads, in one-letter code: Large ribosomal subunit protein uL10 (174 aa).

Belongs to the universal ribosomal protein uL10 family. As to quaternary structure, part of the ribosomal stalk of the 50S ribosomal subunit. The N-terminus interacts with L11 and the large rRNA to form the base of the stalk. The C-terminus forms an elongated spine to which L12 dimers bind in a sequential fashion forming a multimeric L10(L12)X complex.

Functionally, forms part of the ribosomal stalk, playing a central role in the interaction of the ribosome with GTP-bound translation factors. This is Large ribosomal subunit protein uL10 from Anaeromyxobacter dehalogenans (strain 2CP-1 / ATCC BAA-258).